A 221-amino-acid polypeptide reads, in one-letter code: Ras-related protein Rab-28 (221 aa).

Ser-2 carries the post-translational modification N-acetylserine. Phosphoserine is present on Ser-8. Residues Gly-21, Gly-24, Lys-25, Thr-26, Ser-27, Gly-38, Lys-39, Tyr-41, and Thr-44 each contribute to the GTP site. Thr-26 is a binding site for Mg(2+). Residues 35–49 (ETFGKQYKQTIGLDF) form a switch I region. Positions 44 and 68 each coordinate Mg(2+). Residues 68–85 (DIGGQTIGGKMLDKYIYG) form a switch II region. The GTP site is built by Gly-71, Asn-129, Lys-130, Asp-132, Ala-160, and Lys-161. Cys-218 is modified (cysteine methyl ester). Residue Cys-218 is the site of S-farnesyl cysteine attachment. Positions 219–221 (AVQ) are cleaved as a propeptide — removed in mature form.

This sequence belongs to the small GTPase superfamily. Rab family. In terms of assembly, interacts (prenylated form) with PDE6D; the interaction promotes RAB28 delivery to the photoreceptor outer segments. Interacts with KCNJ13; the interaction may facilitate cone outer segments phagocytosis. Interacts with RELA; the interaction contributes to RELA transport from cytoplasm to nucleus. The cofactor is Mg(2+). In terms of processing, isoprenylated.

It is found in the cell membrane. The protein resides in the cytoplasm. It localises to the cytoskeleton. The protein localises to the cilium basal body. Its subcellular location is the nucleus. The enzyme catalyses GTP + H2O = GDP + phosphate + H(+). Regulated by guanine nucleotide exchange factors (GEFs) which promote the exchange of bound GDP for free GTP. Regulated by GTPase activating proteins (GAPs) which increase the GTP hydrolysis activity. Inhibited by GDP dissociation inhibitors (GDIs). Its function is as follows. The small GTPases Rab are key regulators of intracellular membrane trafficking, from the formation of transport vesicles to their fusion with membranes. Rabs cycle between an inactive GDP-bound form and an active GTP-bound form that is able to recruit to membranes different sets of downstream effectors directly responsible for vesicle formation, movement, tethering and fusion. RAB28 is required for shedding and phagocytosis of cone cell outer segments (OS) discs in the retina. Also participates in nuclear factor kappa-B p65/RELA nuclear transport in endothelial cells. This Bos taurus (Bovine) protein is Ras-related protein Rab-28 (RAB28).